The following is a 435-amino-acid chain: Arginine biosynthesis bifunctional protein ArgJ, mitochondrial (435 aa).

Substrate is bound by residues T179, K205, T216, E302, N430, and S435. The Nucleophile role is filled by T216.

Belongs to the ArgJ family. In terms of assembly, heterodimer of an alpha and a beta chain. Post-translationally, the alpha and beta chains are autoproteolytically processed from a single precursor protein within the mitochondrion.

The protein localises to the mitochondrion matrix. It catalyses the reaction N(2)-acetyl-L-ornithine + L-glutamate = N-acetyl-L-glutamate + L-ornithine. The catalysed reaction is L-glutamate + acetyl-CoA = N-acetyl-L-glutamate + CoA + H(+). The protein operates within amino-acid biosynthesis; L-arginine biosynthesis; L-ornithine and N-acetyl-L-glutamate from L-glutamate and N(2)-acetyl-L-ornithine (cyclic): step 1/1. It participates in amino-acid biosynthesis; L-arginine biosynthesis; N(2)-acetyl-L-ornithine from L-glutamate: step 1/4. In terms of biological role, catalyzes two activities which are involved in the cyclic version of arginine biosynthesis: the synthesis of acetylglutamate from glutamate and acetyl-CoA, and of ornithine by transacetylation between acetylornithine and glutamate. The chain is Arginine biosynthesis bifunctional protein ArgJ, mitochondrial from Schizosaccharomyces japonicus (strain yFS275 / FY16936) (Fission yeast).